We begin with the raw amino-acid sequence, 368 residues long: 3-dehydroquinate synthase (368 aa).

NAD(+)-binding positions include 69–74, 103–107, 127–128, K140, and K149; these read DGEAYK, GVIGD, and TT. Zn(2+) contacts are provided by E182, H245, and H262.

Belongs to the sugar phosphate cyclases superfamily. Dehydroquinate synthase family. It depends on Co(2+) as a cofactor. Requires Zn(2+) as cofactor. NAD(+) serves as cofactor.

The protein localises to the cytoplasm. The enzyme catalyses 7-phospho-2-dehydro-3-deoxy-D-arabino-heptonate = 3-dehydroquinate + phosphate. Its pathway is metabolic intermediate biosynthesis; chorismate biosynthesis; chorismate from D-erythrose 4-phosphate and phosphoenolpyruvate: step 2/7. Catalyzes the conversion of 3-deoxy-D-arabino-heptulosonate 7-phosphate (DAHP) to dehydroquinate (DHQ). In Pseudomonas aeruginosa (strain UCBPP-PA14), this protein is 3-dehydroquinate synthase.